A 120-amino-acid chain; its full sequence is Immunogenic miracidial antigen 5D (120 aa).

Residues 41-120 (HIDVGDEDYH…PKKYGSGYKH (80 aa)) form a disordered region. Residues 45–66 (GDEDYHDGDDDVDYTDDVDDVD) show a composition bias toward acidic residues.

This sequence belongs to the immunogenic miracidial antigen family.

The chain is Immunogenic miracidial antigen 5D (5D) from Schistosoma japonicum (Blood fluke).